Consider the following 830-residue polypeptide: Kinesin-like protein KIN-14B (830 aa).

Residues 56–97 (ENISDDNTESEAKVQKIQDELVSLNAQLKQITLQRREALNNY) adopt a coiled-coil conformation. The Kinesin motor domain occupies 103 to 425 (NIRVFCRIRP…LGFATRVRSI (323 aa)). 182-189 (GQTGSGKT) is an ATP binding site. Residues 434 to 476 (EMKARKETLLIDLGQKVNDLEHECEDIRRKIKNLEESMEHLTG) are a coiled coil.

Belongs to the TRAFAC class myosin-kinesin ATPase superfamily. Kinesin family. KIN-14 subfamily.

This chain is Kinesin-like protein KIN-14B, found in Oryza sativa subsp. japonica (Rice).